Consider the following 505-residue polypeptide: 2,3-bisphosphoglycerate-independent phosphoglycerate mutase (505 aa).

Positions 13 and 63 each coordinate Mn(2+). Catalysis depends on S63, which acts as the Phosphoserine intermediate. Residues H124, 153–154 (RD), R183, R189, 254–257 (RADR), and K330 contribute to the substrate site. 5 residues coordinate Mn(2+): D396, H400, D437, H438, and H456.

It belongs to the BPG-independent phosphoglycerate mutase family. As to quaternary structure, monomer. Mn(2+) serves as cofactor.

It catalyses the reaction (2R)-2-phosphoglycerate = (2R)-3-phosphoglycerate. It participates in carbohydrate degradation; glycolysis; pyruvate from D-glyceraldehyde 3-phosphate: step 3/5. Catalyzes the interconversion of 2-phosphoglycerate and 3-phosphoglycerate. In Ruegeria pomeroyi (strain ATCC 700808 / DSM 15171 / DSS-3) (Silicibacter pomeroyi), this protein is 2,3-bisphosphoglycerate-independent phosphoglycerate mutase.